The following is a 372-amino-acid chain: Ligninase H2 (372 aa).

Positions Met-1–Ala-21 are cleaved as a signal peptide. Positions Ala-22–Arg-28 are excised as a propeptide. Intrachain disulfides connect Cys-31/Cys-44, Cys-43/Cys-314, Cys-63/Cys-149, and Cys-278/Cys-344. The active-site Proton acceptor is His-76. Residues Asp-77, Gly-95, Asp-97, and Ser-99 each coordinate Ca(2+). His-205 contacts heme b. 5 residues coordinate Ca(2+): Ser-206, Asp-223, Thr-225, Gln-228, and Asp-230. An N-linked (GlcNAc...) asparagine glycan is attached at Asn-286.

It belongs to the peroxidase family. Ligninase subfamily. The cofactor is heme b. Requires Ca(2+) as cofactor.

The enzyme catalyses 1-(3,4-dimethoxyphenyl)-2-(2-methoxyphenoxy)propane-1,3-diol + H2O2 = 3,4-dimethoxybenzaldehyde + guaiacol + glycolaldehyde + H2O. It carries out the reaction 2 (3,4-dimethoxyphenyl)methanol + H2O2 = 2 (3,4-dimethoxyphenyl)methanol radical + 2 H2O. It functions in the pathway secondary metabolite metabolism; lignin degradation. Its function is as follows. Depolymerization of lignin. Catalyzes the C(alpha)-C(beta) cleavage of the propyl side chains of lignin. This is Ligninase H2 (GLG4) from Phanerodontia chrysosporium (White-rot fungus).